The following is a 738-amino-acid chain: Leucine-rich repeat flightless-interacting protein 1 (738 aa).

At threonine 2 the chain carries N-acetylthreonine. At serine 16 the chain carries Phosphoserine. A compositionally biased stretch (basic and acidic residues) spans 40–65 (IRMKELERQQKEVEERPDKDFAEKGS). Residues 40–98 (IRMKELERQQKEVEERPDKDFAEKGSRNMPSLSAATLASLGGTSSRRGSGDTSISMDTE) are disordered. Positions 78–94 (SLGGTSSRRGSGDTSIS) are enriched in low complexity. Serine 83, serine 84, serine 88, and serine 92 each carry phosphoserine. Residues 94–194 (SMDTEASIRE…LRQREEMLEK (101 aa)) are a coiled coil. A Glycyl lysine isopeptide (Lys-Gly) (interchain with G-Cter in SUMO1) cross-link involves residue lysine 249. Basic and acidic residues-rich tracts occupy residues 253–262 (VEKVGQRETL) and 277–297 (DCVD…RPVE). The interval 253–738 (VEKVGQRETL…SKSKEDCTMS (486 aa)) is disordered. Serine 302 is modified (phosphoserine). Residues 314-326 (EVQSQDQENTSIL) show a composition bias toward polar residues. Basic and acidic residues predominate over residues 330 to 347 (EQIESHEVTNKSDSRDSN). Phosphoserine occurs at positions 346 and 348. Residues 371–380 (KNQSENSMDS) show a composition bias toward polar residues. 2 stretches are compositionally biased toward basic and acidic residues: residues 381–400 (QGKE…RPDH) and 467–476 (SERELAHEAA). The tract at residues 479 to 580 (EEALTQSSQA…KNKKKKAAAP (102 aa)) is DNA-binding. 2 stretches are compositionally biased toward polar residues: residues 483 to 495 (TQSS…NTVT) and 520 to 534 (TVQS…PGST). A compositionally biased stretch (basic and acidic residues) spans 535-553 (DTKHTSPHAKERNKAKSEQ). 2 positions are modified to phosphoserine: serine 551 and serine 560. Basic residues predominate over residues 563–577 (KKTKNKKKKNKKKKA). Over residues 606–626 (RVQATDKKWAAETPELKEDPQ) the composition is skewed to basic and acidic residues. Residues serine 675 and serine 701 each carry the phosphoserine modification. Composition is skewed to basic and acidic residues over residues 691–703 (QADE…HSVD) and 720–738 (EQAR…CTMS).

The protein belongs to the LRRFIP family. Homodimer. May also form higher oligomers. Interacts with FLII. Interacts with MYD88. Competes with FLII for MyD88-binding, even in the absence of LPS.

Its subcellular location is the nucleus. The protein resides in the cytoplasm. Its function is as follows. Transcriptional repressor which preferentially binds to the GC-rich consensus sequence (5'-AGCCCCCGGCG-3') and may regulate expression of TNF, EGFR and PDGFA. May control smooth muscle cells proliferation following artery injury through PDGFA repression. May also bind double-stranded RNA. Positively regulates Toll-like receptor (TLR) signaling in response to agonist probably by competing with the negative FLII regulator for MYD88-binding. This is Leucine-rich repeat flightless-interacting protein 1 (Lrrfip1) from Rattus norvegicus (Rat).